A 139-amino-acid chain; its full sequence is Large ribosomal subunit protein uL16 (139 aa).

Residues 1–17 (MLQPKRTKYRKQQKGRM) show a composition bias toward basic residues. The disordered stretch occupies residues 1 to 25 (MLQPKRTKYRKQQKGRMKGLSQRGH).

This sequence belongs to the universal ribosomal protein uL16 family. Part of the 50S ribosomal subunit.

Binds 23S rRNA and is also seen to make contacts with the A and possibly P site tRNAs. The chain is Large ribosomal subunit protein uL16 from Christiangramia forsetii (strain DSM 17595 / CGMCC 1.15422 / KT0803) (Gramella forsetii).